The following is a 486-amino-acid chain: Chromosomal replication initiator protein DnaA (486 aa).

The domain I, interacts with DnaA modulators stretch occupies residues methionine 1–threonine 79. Positions threonine 79–proline 141 are domain II. Residues phenylalanine 142–isoleucine 358 are domain III, AAA+ region. ATP contacts are provided by glycine 186, glycine 188, lysine 189, and threonine 190. The segment at aspartate 359–asparagine 486 is domain IV, binds dsDNA.

It belongs to the DnaA family. Oligomerizes as a right-handed, spiral filament on DNA at oriC.

Its subcellular location is the cytoplasm. Plays an essential role in the initiation and regulation of chromosomal replication. ATP-DnaA binds to the origin of replication (oriC) to initiate formation of the DNA replication initiation complex once per cell cycle. Binds the DnaA box (a 9 base pair repeat at the origin) and separates the double-stranded (ds)DNA. Forms a right-handed helical filament on oriC DNA; dsDNA binds to the exterior of the filament while single-stranded (ss)DNA is stabiized in the filament's interior. The ATP-DnaA-oriC complex binds and stabilizes one strand of the AT-rich DNA unwinding element (DUE), permitting loading of DNA polymerase. After initiation quickly degrades to an ADP-DnaA complex that is not apt for DNA replication. Binds acidic phospholipids. Functionally, binds to the bpuR promoter, possibly at 5'-TTTTTAAA-3'. The polypeptide is Chromosomal replication initiator protein DnaA (Borreliella burgdorferi (strain ATCC 35210 / DSM 4680 / CIP 102532 / B31) (Borrelia burgdorferi)).